The sequence spans 183 residues: Adenine phosphoribosyltransferase (183 aa).

Belongs to the purine/pyrimidine phosphoribosyltransferase family. In terms of assembly, homodimer.

It localises to the cytoplasm. It carries out the reaction AMP + diphosphate = 5-phospho-alpha-D-ribose 1-diphosphate + adenine. The protein operates within purine metabolism; AMP biosynthesis via salvage pathway; AMP from adenine: step 1/1. Its function is as follows. Catalyzes a salvage reaction resulting in the formation of AMP, that is energically less costly than de novo synthesis. The polypeptide is Adenine phosphoribosyltransferase (Citrobacter koseri (strain ATCC BAA-895 / CDC 4225-83 / SGSC4696)).